The chain runs to 494 residues: ETS translocation variant 4 (494 aa).

2 disordered regions span residues 82–113 (ENSV…SHKQ) and 139–201 (AGGS…SGSA). Residues 100–113 (SPGSDPSQSCSHKQ) are compositionally biased toward polar residues. Low complexity predominate over residues 176–187 (SSSQSHACHSHS). Residues 188–197 (YPMNPSSRFP) are compositionally biased toward polar residues. The ETS DNA-binding region spans 350–430 (LQLWQFLVAL…AGERYVYKFV (81 aa)).

It belongs to the ETS family. Phosphorylated. In the embryo, expressed ubiquitously until the late blastula stage, in the marginal zone of gastrula stages, in the presumptive forebrain and hindbrain and in the trunk region of early somite stages. In later stages, also expressed in Rohon-Beard neurons, epiphysis, lateral line placodes, pectoral fin buds, developing lens and heart.

It is found in the nucleus. Functionally, transcriptional activator that binds to the (5'-CCGGA[AT]-3') motif. May control the acquisition of specific cell fates at an early stage during development of the somites and nervous system. May mediate the cellular effects of the fibroblast growth factors on embryogenesis. This is ETS translocation variant 4 (etv4) from Danio rerio (Zebrafish).